The chain runs to 376 residues: N-acetyldiaminopimelate deacetylase (376 aa).

D69 is an active-site residue. Residue E128 is the Proton acceptor of the active site.

The protein belongs to the peptidase M20A family. N-acetyldiaminopimelate deacetylase subfamily.

It carries out the reaction N-acetyl-(2S,6S)-2,6-diaminopimelate + H2O = (2S,6S)-2,6-diaminopimelate + acetate. Its pathway is amino-acid biosynthesis; L-lysine biosynthesis via DAP pathway; LL-2,6-diaminopimelate from (S)-tetrahydrodipicolinate (acetylase route): step 3/3. Functionally, catalyzes the conversion of N-acetyl-diaminopimelate to diaminopimelate and acetate. This Streptococcus pneumoniae (strain CGSP14) protein is N-acetyldiaminopimelate deacetylase.